Consider the following 389-residue polypeptide: Probable peptidoglycan glycosyltransferase FtsW (389 aa).

The Cytoplasmic segment spans residues 1–14 (MPIRDWRQQSQRWP). The chain crosses the membrane as a helical span at residues 15-35 (IDYWLIGALAILITLGLTMVA). The Periplasmic segment spans residues 36–57 (SSSIAISEKRFGDPTHYLLRQM). The chain crosses the membrane as a helical span at residues 58–78 (FSMGLGLMAAYIVLKIPLSFW). Over 79–84 (RKHRGQ) the chain is Cytoplasmic. Residues 85-105 (LFIVGLVLLVLVLVFGREING) form a helical membrane-spanning segment. Topologically, residues 106–111 (SKRWLP) are periplasmic. The chain crosses the membrane as a helical span at residues 112–132 (LVLMNFQVSEFMKIAVVVFMA). The Cytoplasmic portion of the chain corresponds to 133–144 (GYLDRHATAVRE). The chain crosses the membrane as a helical span at residues 145-165 (SFEAVIRLALPFGVMAILLLL). At 166 to 168 (EPD) the chain is on the periplasmic side. Residues 169–189 (FGSTFVIAVIITGMLLIAGAP) traverse the membrane as a helical segment. Residues 190–191 (WR) lie on the Cytoplasmic side of the membrane. Residues 192 to 212 (FFVMTVLPIATLLVMMVITSP) form a helical membrane-spanning segment. Residues 213–268 (YRMARVTNFLDPWSDPFGNGYQLTQALIASGRGEWFGVGIGESVQKLLYLPDAHTD) lie on the Periplasmic side of the membrane. A helical transmembrane segment spans residues 269–289 (FLFSIYAEEYGLIGVAFLALL). Over 290-310 (YLTLLYRCFRIGRKAFNQTHY) the chain is Cytoplasmic. A helical transmembrane segment spans residues 311-331 (FGGLIAYGVGIWIVLQAMINM). Over 332 to 344 (GVNLGLFPTKGLT) the chain is Periplasmic. A helical transmembrane segment spans residues 345–365 (LPFMSYGGSSVLMLFIGVAMV). Topologically, residues 366 to 389 (LRVDLETRQAVLEHSVDESGQGKR) are cytoplasmic.

The protein belongs to the SEDS family. FtsW subfamily.

Its subcellular location is the cell inner membrane. The catalysed reaction is [GlcNAc-(1-&gt;4)-Mur2Ac(oyl-L-Ala-gamma-D-Glu-L-Lys-D-Ala-D-Ala)](n)-di-trans,octa-cis-undecaprenyl diphosphate + beta-D-GlcNAc-(1-&gt;4)-Mur2Ac(oyl-L-Ala-gamma-D-Glu-L-Lys-D-Ala-D-Ala)-di-trans,octa-cis-undecaprenyl diphosphate = [GlcNAc-(1-&gt;4)-Mur2Ac(oyl-L-Ala-gamma-D-Glu-L-Lys-D-Ala-D-Ala)](n+1)-di-trans,octa-cis-undecaprenyl diphosphate + di-trans,octa-cis-undecaprenyl diphosphate + H(+). It participates in cell wall biogenesis; peptidoglycan biosynthesis. Its function is as follows. Peptidoglycan polymerase that is essential for cell division. The sequence is that of Probable peptidoglycan glycosyltransferase FtsW from Hydrogenovibrio crunogenus (strain DSM 25203 / XCL-2) (Thiomicrospira crunogena).